Reading from the N-terminus, the 215-residue chain is 3-isopropylmalate dehydratase small subunit (215 aa).

Belongs to the LeuD family. LeuD type 1 subfamily. Heterodimer of LeuC and LeuD.

The catalysed reaction is (2R,3S)-3-isopropylmalate = (2S)-2-isopropylmalate. It participates in amino-acid biosynthesis; L-leucine biosynthesis; L-leucine from 3-methyl-2-oxobutanoate: step 2/4. Functionally, catalyzes the isomerization between 2-isopropylmalate and 3-isopropylmalate, via the formation of 2-isopropylmaleate. The chain is 3-isopropylmalate dehydratase small subunit from Chromohalobacter salexigens (strain ATCC BAA-138 / DSM 3043 / CIP 106854 / NCIMB 13768 / 1H11).